The following is a 63-amino-acid chain: Large ribosomal subunit protein uL29 (63 aa).

The protein belongs to the universal ribosomal protein uL29 family.

This Proteus mirabilis (strain HI4320) protein is Large ribosomal subunit protein uL29.